A 203-amino-acid polypeptide reads, in one-letter code: MPSKNGPLRIGIGGPVGSGKTALTDKLCKAMREKYSVAVVTNDIYTKEDAEALVRMQALPSERIVGVETGGCPHTAIREDASINLQAIADLNRRIPDLDVVFIESGGDNLAATFSPDLADLTIYVISVCQGEEIPRKGGPGITRSDLLVINKKDLAPYVGADLGVMERDAARMRAEKPFVFSDMKRGDGVERIVEFLTVHGGL.

14-21 (GPVGSGKT) serves as a coordination point for GTP.

This sequence belongs to the SIMIBI class G3E GTPase family. UreG subfamily. Homodimer. UreD, UreF and UreG form a complex that acts as a GTP-hydrolysis-dependent molecular chaperone, activating the urease apoprotein by helping to assemble the nickel containing metallocenter of UreC. The UreE protein probably delivers the nickel.

The protein resides in the cytoplasm. Facilitates the functional incorporation of the urease nickel metallocenter. This process requires GTP hydrolysis, probably effectuated by UreG. The protein is Urease accessory protein UreG of Rhizobium meliloti (strain 1021) (Ensifer meliloti).